A 378-amino-acid chain; its full sequence is Quinolinate synthase (378 aa).

Iminosuccinate-binding residues include H59 and S80. Residue C125 participates in [4Fe-4S] cluster binding. Residues 151–153 (YAN) and S168 contribute to the iminosuccinate site. C212 lines the [4Fe-4S] cluster pocket. Iminosuccinate is bound by residues 238-240 (HPE) and T255. C309 lines the [4Fe-4S] cluster pocket.

Belongs to the quinolinate synthase family. Type 1 subfamily. [4Fe-4S] cluster serves as cofactor.

It is found in the cytoplasm. The catalysed reaction is iminosuccinate + dihydroxyacetone phosphate = quinolinate + phosphate + 2 H2O + H(+). It participates in cofactor biosynthesis; NAD(+) biosynthesis; quinolinate from iminoaspartate: step 1/1. Catalyzes the condensation of iminoaspartate with dihydroxyacetone phosphate to form quinolinate. The polypeptide is Quinolinate synthase (Burkholderia mallei (strain NCTC 10247)).